A 109-amino-acid polypeptide reads, in one-letter code: Parvalbumin beta-1 (109 aa).

Residue S2 is modified to N-acetylserine. 2 consecutive EF-hand domains span residues 39 to 74 (KSHE…FGAG) and 78 to 109 (LTAA…LVKA). Ca(2+)-binding residues include D52, D54, S56, F58, E60, E63, D91, D93, D95, M97, and E102.

Belongs to the parvalbumin family.

In muscle, parvalbumin is thought to be involved in relaxation after contraction. It binds two calcium ions. The chain is Parvalbumin beta-1 from Gadus chalcogrammus (Alaska pollock).